A 162-amino-acid polypeptide reads, in one-letter code: Ribonuclease P protein component (162 aa).

Residues 1 to 67 (MDEKDLAAQP…GGKLVSLKGD (67 aa)) are disordered. The segment covering 21–31 (GPHEDPRRQEG) has biased composition (basic and acidic residues).

The protein belongs to the RnpA family. Consists of a catalytic RNA component (M1 or rnpB) and a protein subunit.

The catalysed reaction is Endonucleolytic cleavage of RNA, removing 5'-extranucleotides from tRNA precursor.. Functionally, RNaseP catalyzes the removal of the 5'-leader sequence from pre-tRNA to produce the mature 5'-terminus. It can also cleave other RNA substrates such as 4.5S RNA. The protein component plays an auxiliary but essential role in vivo by binding to the 5'-leader sequence and broadening the substrate specificity of the ribozyme. This Thermus brockianus protein is Ribonuclease P protein component.